The primary structure comprises 448 residues: UDP-N-acetylmuramoylalanine--D-glutamate ligase (448 aa).

112–118 (GSNAKST) is a binding site for ATP.

It belongs to the MurCDEF family.

The protein localises to the cytoplasm. The catalysed reaction is UDP-N-acetyl-alpha-D-muramoyl-L-alanine + D-glutamate + ATP = UDP-N-acetyl-alpha-D-muramoyl-L-alanyl-D-glutamate + ADP + phosphate + H(+). It participates in cell wall biogenesis; peptidoglycan biosynthesis. Functionally, cell wall formation. Catalyzes the addition of glutamate to the nucleotide precursor UDP-N-acetylmuramoyl-L-alanine (UMA). This chain is UDP-N-acetylmuramoylalanine--D-glutamate ligase, found in Acinetobacter baumannii (strain ACICU).